Reading from the N-terminus, the 581-residue chain is uncharacterized protein (581 aa).

This is an uncharacterized protein from Acanthamoeba polyphaga mimivirus (APMV).